The following is a 414-amino-acid chain: Stork-head box protein ham-1 (414 aa).

The segment at 1-31 is essential for association with cell cortex; it reads MTYLAVVLNGPKAKNGRKVFDSFLEQNRQMF. Positions 93-170 constitute a Winged helix Storkhead-box1 domain; the sequence is QQVEQMHFVP…MADHYFVSVP (78 aa). The tract at residues 282 to 362 is disordered; that stretch reads ECQRKARRRN…SNEEAGSISD (81 aa). The tract at residues 285-295 is bi-partite nuclear localization signal; it reads RKARRRNHPRR. The tract at residues 321–327 is nuclear localization signal; it reads PTRRRAR. Residues 332–351 show a composition bias toward polar residues; sequence LRSSTPNNSDSAYSISPPHT.

It localises to the cytoplasm. The protein localises to the cell cortex. It is found in the nucleus. Functionally, probable transcription factor. Required for asymmetric cell division in neuroblasts, perhaps acting by regulating spindle positioning and myosin polarization, and thus the position of the cleavage plane. Required to produce daughter cell size asymmetry in neuroblasts undergoing asymmetric cell division, usually giving rise to one precursor cell and one apoptotic cell. Positively modulates expression of the serine/threonine kinase pig-1/MELK during asymmetric division of the Q.a neuroblast. Plays a role in neural fate specification in several dopaminergic lineages, including the hermaphrodite-specific neuron (HSN)/phasmid neuron (PHB), acting in concert with the kinase, ham-1, and the T-box protein tbx-2 and the homeobox protein egl-5. In Caenorhabditis elegans, this protein is Stork-head box protein ham-1.